The primary structure comprises 88 residues: Probable Fe(2+)-trafficking protein (88 aa).

This sequence belongs to the Fe(2+)-trafficking protein family.

In terms of biological role, could be a mediator in iron transactions between iron acquisition and iron-requiring processes, such as synthesis and/or repair of Fe-S clusters in biosynthetic enzymes. The protein is Probable Fe(2+)-trafficking protein of Neisseria gonorrhoeae (strain ATCC 700825 / FA 1090).